The chain runs to 358 residues: Alanine racemase (358 aa).

Lys-35 (proton acceptor; specific for D-alanine) is an active-site residue. An N6-(pyridoxal phosphate)lysine modification is found at Lys-35. Substrate is bound at residue Arg-130. Residue Tyr-255 is the Proton acceptor; specific for L-alanine of the active site. Met-303 serves as a coordination point for substrate.

This sequence belongs to the alanine racemase family. Requires pyridoxal 5'-phosphate as cofactor.

The enzyme catalyses L-alanine = D-alanine. The protein operates within amino-acid biosynthesis; D-alanine biosynthesis; D-alanine from L-alanine: step 1/1. Functionally, catalyzes the interconversion of L-alanine and D-alanine. May also act on other amino acids. In Shewanella piezotolerans (strain WP3 / JCM 13877), this protein is Alanine racemase (alr).